We begin with the raw amino-acid sequence, 1687 residues long: Protein TOPAZ1 (1687 aa).

Disordered regions lie at residues 1–132, 596–632, and 938–969; these read MRRP…PGFD, LSRS…GNLT, and ASEI…GDFS. Over residues 31–41 the composition is skewed to gly residues; sequence GAAGGCGPEAG. The span at 80 to 113 shows a compositional bias: basic and acidic residues; that stretch reads RRVEGRRGQVSPSDRRGLEAAKEAEFPLQTERHT. Composition is skewed to polar residues over residues 598-622 and 948-963; these read RSGS…SLTG and ANTS…SENE.

Its subcellular location is the cytoplasm. The protein resides in the cytosol. Important for normal spermatogenesis and male fertility. Specifically required for progression to the post-meiotic stages of spermatocyte development. Seems to be necessary for normal expression levels of a number of testis-expressed gene transcripts, although its role in this process is unclear. The protein is Protein TOPAZ1 (TOPAZ1) of Macaca mulatta (Rhesus macaque).